A 2096-amino-acid polypeptide reads, in one-letter code: Tudor domain-containing protein 6 (2096 aa).

Positions 65–120 (ASASPGELCLVQVGLLWHRCRVVSRQAQESRVFLLDEGRTITAGAGSLAPGRREFF) constitute a Tudor 1 domain. The tract at residues 287–316 (YRGSTGTGDENSTSATWEEREESPDKPGSP) is disordered. Over residues 288–302 (RGSTGTGDENSTSAT) the composition is skewed to polar residues. A Phosphothreonine modification is found at T293. Tudor domains are found at residues 310–369 (PDKP…YFRM), 536–593 (KPEP…FRQL), 816–875 (HQRN…FLKV), 1033–1088 (PLNP…AYDV), 1352–1411 (PLQR…NAIL), and 1567–1626 (CPYI…ELLS). S1722 and S2062 each carry phosphoserine. Residues 2026–2084 (AFTVGSKCVVWSSLRNTWSKCEILETAEEGTRVLNLSNGMEEIVNPENVWNGIPKLDKS) enclose the Tudor 8 domain.

Found in a mRNP complex (i.e. messenger ribonucleoproteins which correspond to mRNA with bound proteins), at least composed of TDRD1, TDRD6, TDRD7 and DDX4. Found in a complex, at least composed of PIWIL1, PIWIL2, DDX4 and TDRD6. Interacts with Tex19.1 and probably Tex19.2. Interacts with PRMT5. Interacts with SNRPB (when methylated); to trigger spliceosome formation. In terms of processing, undergoes proteolytic cleavage near the C-terminal by an unknown protease during the transition from meiosis I to meiosis II in primary spermatocytes.

It is found in the cytoplasm. Functionally, tudor domain-containing protein involved in germ cell development, more specifically the formation of chromatoid body (during spermiogenesis), Balbiani body (during oogenesis), germ plasm (upon fertilization), and for proper miRNA expression and spliceosome maturation. Essential for RNA-dependent helicase UPF1 localization to chromatoid body, for UPF1-UPF2 and UPF1-DDX4 interactions which are required for mRNA degradation, using the extended 3' UTR-triggered nonsense-mediated mRNA decay (NMD) pathway. Involved in spliceosome maturation and mRNA splicing in prophase I spermatocytes through interaction with arginine N-methyltransferase PRMT5 and symmetrically arginine dimethylated SNRPB (small nuclear ribonucleoprotein-associated protein). The sequence is that of Tudor domain-containing protein 6 from Homo sapiens (Human).